Reading from the N-terminus, the 268-residue chain is tRNA pseudouridine synthase A (268 aa).

Residue Asp-52 is the Nucleophile of the active site. Residue Tyr-110 participates in substrate binding.

Belongs to the tRNA pseudouridine synthase TruA family. As to quaternary structure, homodimer.

It carries out the reaction uridine(38/39/40) in tRNA = pseudouridine(38/39/40) in tRNA. In terms of biological role, formation of pseudouridine at positions 38, 39 and 40 in the anticodon stem and loop of transfer RNAs. This chain is tRNA pseudouridine synthase A, found in Prochlorococcus marinus (strain MIT 9515).